The following is a 294-amino-acid chain: Indole-3-glycerol phosphate synthase (294 aa).

Belongs to the TrpC family.

It carries out the reaction 1-(2-carboxyphenylamino)-1-deoxy-D-ribulose 5-phosphate + H(+) = (1S,2R)-1-C-(indol-3-yl)glycerol 3-phosphate + CO2 + H2O. Its pathway is amino-acid biosynthesis; L-tryptophan biosynthesis; L-tryptophan from chorismate: step 4/5. This Synechococcus sp. (strain RCC307) protein is Indole-3-glycerol phosphate synthase.